The primary structure comprises 364 residues: GTPase Obg (364 aa).

Residues 1-159 form the Obg domain; the sequence is MKFIDEARIE…RNLRLELKVL (159 aa). Positions 128–147 are disordered; that stretch reads IHFKSSTNRAPRQKTDGKAG. Positions 160 to 334 constitute an OBG-type G domain; it reads ADVGLLGMPN…LVHAIQEYLD (175 aa). Residues 166–173, 191–195, 213–216, 284–287, and 315–317 contribute to the GTP site; these read GMPNAGKS, FTTLH, DIPG, NKLD, and SAL. Mg(2+) contacts are provided by Ser-173 and Thr-193. The interval 340–364 is disordered; it reads EDAAAAAPDQRLDPTLHNVDHDDQA. Basic and acidic residues predominate over residues 349 to 364; that stretch reads QRLDPTLHNVDHDDQA.

Belongs to the TRAFAC class OBG-HflX-like GTPase superfamily. OBG GTPase family. In terms of assembly, monomer. Requires Mg(2+) as cofactor.

It localises to the cytoplasm. In terms of biological role, an essential GTPase which binds GTP, GDP and possibly (p)ppGpp with moderate affinity, with high nucleotide exchange rates and a fairly low GTP hydrolysis rate. Plays a role in control of the cell cycle, stress response, ribosome biogenesis and in those bacteria that undergo differentiation, in morphogenesis control. The chain is GTPase Obg from Ralstonia pickettii (strain 12J).